Here is a 132-residue protein sequence, read N- to C-terminus: Global transcriptional regulator Spx (132 aa).

C10 and C13 are joined by a disulfide.

The protein belongs to the ArsC family. Spx subfamily. Interacts with the C-terminal domain of the alpha subunit of the RNAP.

The protein resides in the cytoplasm. Functionally, global transcriptional regulator that plays a key role in stress response and exerts either positive or negative regulation of genes. Acts by interacting with the C-terminal domain of the alpha subunit of the RNA polymerase (RNAP). This interaction can enhance binding of RNAP to the promoter region of target genes and stimulate their transcription, or block interaction of RNAP with activator. The sequence is that of Global transcriptional regulator Spx from Enterococcus faecalis (strain ATCC 700802 / V583).